Reading from the N-terminus, the 402-residue chain is Phytoene synthase 2, chloroplastic (402 aa).

Residues 1 to 54 (MAAGSSAVWAAQHPACSGGKFHHLSPSHSHCRPRRALQTPPALPARRSGASPPR) constitute a chloroplast transit peptide. Residues 20–35 (KFHHLSPSHSHCRPRR) are compositionally biased toward basic residues. The segment at 20–54 (KFHHLSPSHSHCRPRRALQTPPALPARRSGASPPR) is disordered. Positions 44-54 (PARRSGASPPR) are enriched in low complexity.

Belongs to the phytoene/squalene synthase family. As to expression, expressed in leaves and endosperm.

Its subcellular location is the plastid. The protein resides in the chloroplast. The protein localises to the plastoglobule. The enzyme catalyses 2 (2E,6E,10E)-geranylgeranyl diphosphate = 15-cis-phytoene + 2 diphosphate. Functionally, catalyzes the conversion of geranylgeranyl diphosphate to phytoene. Mediates the first committed step in carotenoid biosynthesis. The polypeptide is Phytoene synthase 2, chloroplastic (Zea mays (Maize)).